Consider the following 938-residue polypeptide: Myocardin (938 aa).

Residues 12-27 (IRSKFRSVLQLRLQQR) carry the MEF2C-binding motif. The RPEL 1 repeat unit spans residues 18 to 43 (SVLQLRLQQRRTQEQLANQGIIPPLK). Positions 48-61 (FHEQRKHLDSDKAK) are enriched in basic and acidic residues. A disordered region spans residues 48-68 (FHEQRKHLDSDKAKNSLKRKA). 2 RPEL repeats span residues 62–87 (NSLKRKARNRCNSADLVNMHILQAST) and 106–131 (DDLNEKIALRPGPLELVEKNILPVDS). The interval 153 to 205 (FEEDSSSDGLSPDQTRSEDPQNSAGSPPDAKASDTPSTGSLGTNQDLASGSEN) is HDAC5-binding. The segment at 154 to 281 (EEDSSSDGLS…DQKAEKSPPP (128 aa)) is disordered. Polar residues-rich tracts occupy residues 159-177 (SDGLSPDQTRSEDPQNSAG), 186-203 (DTPSTGSLGTNQDLASGS), and 210-220 (SASQPSHQSDA). Over residues 248–265 (NRHKKPKDPKPKVKKLKY) the composition is skewed to basic residues. The SAP domain occupies 371–405 (LDDLKVSELRQQLRIRGLPVSGTKTALMDRLRPFQ). Phosphoserine; by GSK3-beta is present on residues S451, S455, S459, and S463. Residues 516–561 (EKDKMLVEKQKVINELTWKLQQEQRQVEELRMQLQKQKRNNCSEKK) adopt a coiled-coil conformation. Residues S626, S630, S634, and S638 each carry the phosphoserine; by GSK3-beta modification. Disordered regions lie at residues 635–678 (PQHS…SSPI) and 693–734 (SDKV…MTRS). The span at 699–715 (KFSIPSPTFSKSSSAIS) shows a compositional bias: low complexity. Positions 717–938 (VTQPPSYEDA…SSMDLHLQQW (222 aa)) are required for interaction with and ubiquitination by STUB1. S815, S862, and S869 each carry phosphoserine; by MAPK1 and MAPK3. A Phosphothreonine; by MAPK1 and MAPK3 modification is found at T896.

As to quaternary structure, homodimer. Interacts with SRF, its association does not depend on specific DNA sequences for ternary complex formation. Interacts with MLLT7/FOXO4. Interacts (via C-terminal) with EP300 (via the CREB-binding domain). Interacts with HDAC4 and HDAC5. Interacts with MEF2C. Interacts (via C-terminus) with STUB1/CHIP. Interacts with PURB. Post-translationally, ubiquitinated; by STUB1/CHIP at the C-terminus, leading to its degradation by the proteasome. Phosphorylation by GSK3B is required for STUB1/CHIP-mediated ubiquitination. Phosphorylation negatively regulates the intrinsic myocardin transcriptional activity. Phosphorylated; by GSK3B. Expressed in the heart, aorta and bladder. Expressed in smooth muscle cell-containing tissues: stomach, small intestine, colon, lung, placenta and uterus. Very faint expression in prostate and skeletal muscle.

The protein localises to the nucleus. In terms of biological role, smooth muscle cells (SM) and cardiac muscle cells-specific transcriptional factor which uses the canonical single or multiple CArG boxes DNA sequence. Acts as a cofactor of serum response factor (SRF) with the potential to modulate SRF-target genes. Plays a crucial role in cardiogenesis, urinary bladder development, and differentiation of the smooth muscle cell lineage (myogenesis). Positively regulates the transcription of genes involved in vascular smooth muscle contraction. This Homo sapiens (Human) protein is Myocardin (MYOCD).